Reading from the N-terminus, the 419-residue chain is Gamma-glutamyl phosphate reductase (419 aa).

The protein belongs to the gamma-glutamyl phosphate reductase family.

Its subcellular location is the cytoplasm. It carries out the reaction L-glutamate 5-semialdehyde + phosphate + NADP(+) = L-glutamyl 5-phosphate + NADPH + H(+). It participates in amino-acid biosynthesis; L-proline biosynthesis; L-glutamate 5-semialdehyde from L-glutamate: step 2/2. Its function is as follows. Catalyzes the NADPH-dependent reduction of L-glutamate 5-phosphate into L-glutamate 5-semialdehyde and phosphate. The product spontaneously undergoes cyclization to form 1-pyrroline-5-carboxylate. This is Gamma-glutamyl phosphate reductase from Gloeobacter violaceus (strain ATCC 29082 / PCC 7421).